A 61-amino-acid polypeptide reads, in one-letter code: Small ribosomal subunit protein uS14 (61 aa).

4 residues coordinate Zn(2+): cysteine 24, cysteine 27, cysteine 40, and cysteine 43.

This sequence belongs to the universal ribosomal protein uS14 family. Zinc-binding uS14 subfamily. In terms of assembly, part of the 30S ribosomal subunit. Contacts proteins S3 and S10. Requires Zn(2+) as cofactor.

Functionally, binds 16S rRNA, required for the assembly of 30S particles and may also be responsible for determining the conformation of the 16S rRNA at the A site. In Mycoplasmopsis pulmonis (strain UAB CTIP) (Mycoplasma pulmonis), this protein is Small ribosomal subunit protein uS14.